A 1217-amino-acid chain; its full sequence is Myosin-5 (1217 aa).

A compositionally biased stretch (basic residues) spans 1–11 (MAILKRGARNK). The segment at 1 to 24 (MAILKRGARNKTHQEPAKRGGNNI) is disordered. The Myosin motor domain occupies 37-716 (VGVSDLTLLT…TLFALENMRD (680 aa)). 130–137 (GESGAGKT) contributes to the ATP binding site. Ser-358 is modified (phosphoserine). An actin-binding region spans residues 405–487 (SIGILDIYGF…PGIFAAMNDS (83 aa)). 2 consecutive IQ domains span residues 720-740 (HNMA…RIDA) and 741-766 (AVKI…YGTS). Positions 772–962 (KERRSMSLLG…TIFVRRGNPA (191 aa)) constitute a TH1 domain. Disordered stretches follow at residues 956 to 1102 (VRRG…NPSE), 1145 to 1174 (GAKA…AQTV), and 1197 to 1217 (NKMR…DDDW). Over residues 965–974 (KSKKKPRKKS) the composition is skewed to basic residues. A compositionally biased stretch (polar residues) spans 976–987 (GMSAPTTQSSKT). Low complexity predominate over residues 994-1007 (SSNNQNTTVSQSLN). Residues 1025 to 1038 (PAPPPPGSKKPAPQ) show a composition bias toward pro residues. Low complexity predominate over residues 1050 to 1071 (PQAQMQTQTQIPASQSSATQSS). The span at 1072 to 1081 (IPPPPPPPPS) shows a compositional bias: pro residues. An SH3 domain is found at 1083-1145 (TSEPQFEAAY…PTAYMVKHEG (63 aa)). A compositionally biased stretch (polar residues) spans 1162 to 1174 (IQNQSQPASAQTV). Positions 1203–1217 (SDEEAAASSDNDDDW) are enriched in acidic residues.

Belongs to the TRAFAC class myosin-kinesin ATPase superfamily. Myosin family. In terms of processing, phosphorylation of the TEDS site (Ser-358) is required for the polarization of the actin cytoskeleton. Phosphorylation probably activates the myosin-I ATPase activity.

The protein resides in the cytoplasm. It is found in the cytoskeleton. It localises to the actin patch. Functionally, type-I myosin implicated in the organization of the actin cytoskeleton. Required for proper actin cytoskeleton polarization. At the cell cortex, assembles in patch-like structures together with proteins from the actin-polymerizing machinery and promotes actin assembly. Functions as actin nucleation-promoting factor (NPF) for the Arp2/3 complex. In Candida glabrata (strain ATCC 2001 / BCRC 20586 / JCM 3761 / NBRC 0622 / NRRL Y-65 / CBS 138) (Yeast), this protein is Myosin-5 (MYO5).